The primary structure comprises 1176 residues: MANTSLDMASSTSPSPSPESTTTPRKRIVVVGLGMVGIAFIEKLIKLDTQRQYEIVVIGEEPHVAYNRVGLTSFFSHREVEQLYLNPLEWYKQHLQTSSLTHHLSTAALSLSPATKSLTISPPPSTPSLTTLPYDHLILATGSSALLPTSTPGHDASGVFVYRNIADLQSLITWSSDTQIKGSTGVVVGGGLLGLEAAKALMDLQVFGRVVVIERNGWVLSRQVDGEAGALVLEGVRGLGVEVLTRKRVKEVECDESKDEGEKEKKRVKGIRFEDGEYLACSTICFAIGIKARDELAREAGITCAERGGGGIVVDDSLQTSAPDVYAIGECASWKGQTFGLIGPGVEMADVLAFNFTQAHLHTPRVFKRPDLSTKLKLLGVEVASFGDFFADRDGPKELPPKLRRELKKSGGKAEVKALTYKDPFLSVYKKYIFTSDGKYLLGGMMIGDTTDYVRLVPLVKTHKELDVPPSQLILGAKKSGDDNGDDDLPDDTQICSCHNVTKADLVAPLKSGECTSLGDLKSCTKAGTGCGGCMPLVTSIFNRTMASLGTEVKNNLCPHFPEYSRADLYNIISVKRLRTLPDVMREAGADADSLGCEACKPAIASIFASLWNDHVMSPAHHGLQDTNDRFMGNIQRNGTFSVVPRVAAGEITPEKLIVIGEVAKEYNLYTKITGGQRIDMFGAKKQDLLKIWKKLVDAGMESGHAYAKSLRTVKSCVGTTWCRYGVGDSVGMAVRLEERYKGLRGPHKIKGGVSGCTRECAEAGNKDFGLIATEKGFNILICGNGGTTPKHSVLLAKDVPPTNVIPIIDRFLMFYIRTADKLQRTARWLEALPGGIDYLKEVILEDRLGICASLEAQMQELVDSYFDEWAEALNNPAMQERFKQFANTDEGQPPMEVEIDRGQERPVMWPREDEGGSAKADFKGLRDKWSSTTWQPVLEASYFQGADDLPNGISASIKRGDTQLAVWRIKGKYYASQQMCPHKRTFALSDGFVGTDPSPSSCSSSALPPSPPSTPPRSSSPVTSPPQSPTSSATPATTASSSCTTNPSGPASPWISCPFHKRNFSLTSGSCKNDNELSIATFDVEERDDGMVYIKLPPVDELDRELGTKKWMVKKGEAGEGQLRELDELNKSKGVEGKKGRRGRKPGASEAGKEVGKKLVEAVGGGGCGGPGLEW.

Positions Met1 to Thr23 are disordered. The segment covering Ser10–Thr23 has biased composition (low complexity). Lys26–Glu60 provides a ligand contact to FAD. Ser183–Arg215 serves as a coordination point for NAD(+). Residues Cys496, Cys498, Cys531, and Cys534 each contribute to the [2Fe-2S] cluster site. [4Fe-4S] cluster-binding residues include Cys717, Cys723, Cys757, and Cys761. Siroheme is bound at residue Cys761. In terms of domain architecture, Rieske; atypical spans Ser942–Tyr1094. Residues Cys981 and His983 each coordinate [2Fe-2S] cluster. Low complexity-rich tracts occupy residues Pro998–Leu1008 and Pro1030–Ser1049. Positions Pro998–Pro1051 are disordered. Positions 1058 and 1061 each coordinate [2Fe-2S] cluster. Over residues Leu1124–Lys1139 the composition is skewed to basic and acidic residues. A disordered region spans residues Leu1124–Gly1157.

This sequence belongs to the nitrite and sulfite reductase 4Fe-4S domain family. In terms of assembly, homodimer. Requires siroheme as cofactor. The cofactor is [4Fe-4S] cluster. It depends on FAD as a cofactor. [2Fe-2S] cluster serves as cofactor.

It catalyses the reaction NH4(+) + 3 NADP(+) + 2 H2O = nitrite + 3 NADPH + 5 H(+). The enzyme catalyses NH4(+) + 3 NAD(+) + 2 H2O = nitrite + 3 NADH + 5 H(+). Its pathway is nitrogen metabolism; nitrate reduction (assimilation). The sequence is that of Nitrite reductase [NAD(P)H] (nit-6) from Neurospora crassa (strain ATCC 24698 / 74-OR23-1A / CBS 708.71 / DSM 1257 / FGSC 987).